Here is an 876-residue protein sequence, read N- to C-terminus: Exosome complex component 10 homolog (876 aa).

The segment at 1–22 is disordered; it reads MSGEESMPDEEQKQSEEEEEMI. Residues 279-445 form the 3'-5' exonuclease domain; it reads TMIDTKEKLE…YSYDMLREQL (167 aa). Mg(2+) is bound by residues Asp-303, Glu-305, Asp-361, and Asp-430. In terms of domain architecture, HRDC spans 489–569; the sequence is NTRQDYALTH…VEARDVKLEK (81 aa). Composition is skewed to basic and acidic residues over residues 690 to 730, 741 to 752, and 834 to 847; these read EKQE…EFDA, VPDDPNKPKDPE, and KPVR…DPFH. The tract at residues 690-876 is disordered; sequence EKQEEEERKE…NRQGTINYKK (187 aa). Basic residues predominate over residues 848–861; that stretch reads QKYRLKNKTKKNMA.

Belongs to the exosome component 10/RRP6 family. Component of the RNA exosome complex. Interacts with crn-5. Mg(2+) serves as cofactor. As to expression, ubiquitously expressed.

The protein resides in the nucleus. It is found in the nucleolus. The protein localises to the nucleoplasm. Catalytic component of the RNA exosome complex which has 3'-&gt;5' exoribonuclease activity and participates in a multitude of cellular RNA processing and degradation events. Involved in apoptotic DNA degradation. Involved in regulation of antisense ribosomal siRNA production. Involved in response to cold-warm shock. This chain is Exosome complex component 10 homolog, found in Caenorhabditis elegans.